The sequence spans 244 residues: Trypsin (244 aa).

The N-terminal stretch at 1-15 (MKFLVILVLLGAAVA) is a signal peptide. Positions 16–21 (FEDDDK) are cleaved as a propeptide — activation peptide. A Peptidase S1 domain is found at 22 to 242 (IVGGFTCAKN…FVTWIQSTIS (221 aa)). 6 disulfides stabilise this stretch: Cys28-Cys158, Cys46-Cys62, Cys130-Cys231, Cys137-Cys204, Cys169-Cys183, and Cys194-Cys218. His61 acts as the Charge relay system in catalysis. Positions 73, 75, and 83 each coordinate Ca(2+). The active-site Charge relay system is the Asp105. The active-site Charge relay system is the Ser198.

Belongs to the peptidase S1 family. Ca(2+) serves as cofactor.

The protein localises to the secreted. Its subcellular location is the extracellular space. It carries out the reaction Preferential cleavage: Arg-|-Xaa, Lys-|-Xaa.. The protein is Trypsin of Xenopus laevis (African clawed frog).